The following is a 294-amino-acid chain: Proline iminopeptidase (294 aa).

The 251-residue stretch at 28–278 (PLLLLHGGPG…GCGHMPFVQE (251 aa)) folds into the AB hydrolase-1 domain. The active-site Nucleophile is S106. Residue D245 is part of the active site. Residue H272 is the Proton donor of the active site.

It belongs to the peptidase S33 family. As to quaternary structure, homotrimer.

It localises to the cell envelope. It carries out the reaction Release of N-terminal proline from a peptide.. Its activity is regulated as follows. Inhibited by 3,4-DCI, but no significant effect on enzyme activity by pepstatin A, E-64, 1,10-phenanthroline or EDTA. In terms of biological role, releases the N-terminal proline from various substrates. Cleaves Pro-betaNA (L-prolyl-beta-naphthylamide) effectively. This is Proline iminopeptidase (pip) from Lactobacillus delbrueckii subsp. lactis.